The sequence spans 153 residues: Arginine repressor (153 aa).

Belongs to the ArgR family.

It is found in the cytoplasm. Its pathway is amino-acid biosynthesis; L-arginine biosynthesis [regulation]. Its function is as follows. Regulates arginine biosynthesis genes. The chain is Arginine repressor from Clostridium tetani (strain Massachusetts / E88).